Reading from the N-terminus, the 430-residue chain is 3-phosphoshikimate 1-carboxyvinyltransferase (430 aa).

Residues K23, S24, and R28 each contribute to the 3-phosphoshikimate site. K23 provides a ligand contact to phosphoenolpyruvate. 2 residues coordinate phosphoenolpyruvate: G93 and R121. Positions 166, 168, 313, and 340 each coordinate 3-phosphoshikimate. Q168 contributes to the phosphoenolpyruvate binding site. The Proton acceptor role is filled by D313. Phosphoenolpyruvate contacts are provided by R344 and R386.

It belongs to the EPSP synthase family. Monomer.

The protein localises to the cytoplasm. The catalysed reaction is 3-phosphoshikimate + phosphoenolpyruvate = 5-O-(1-carboxyvinyl)-3-phosphoshikimate + phosphate. The protein operates within metabolic intermediate biosynthesis; chorismate biosynthesis; chorismate from D-erythrose 4-phosphate and phosphoenolpyruvate: step 6/7. In terms of biological role, catalyzes the transfer of the enolpyruvyl moiety of phosphoenolpyruvate (PEP) to the 5-hydroxyl of shikimate-3-phosphate (S3P) to produce enolpyruvyl shikimate-3-phosphate and inorganic phosphate. This chain is 3-phosphoshikimate 1-carboxyvinyltransferase, found in Anaeromyxobacter sp. (strain Fw109-5).